The chain runs to 429 residues: Nucleotide exchange factor Sil1 (429 aa).

A signal peptide spans Met-1–Ala-24. A glycan (N-linked (GlcNAc...) asparagine) is linked at Asn-29. The tract at residues Asp-70–Ala-98 is disordered. The segment covering Gly-75 to Asp-84 has biased composition (polar residues). Basic and acidic residues predominate over residues Gln-85 to Asn-94. Positions Asp-104–Arg-135 form a coiled coil. N-linked (GlcNAc...) asparagine glycosylation is found at Asn-150, Asn-199, and Asn-400. A Prevents secretion from ER motif is present at residues His-426–Leu-429.

This sequence belongs to the SIL1 family.

The protein localises to the endoplasmic reticulum lumen. Required for protein translocation and folding in the endoplasmic reticulum (ER). Functions as a nucleotide exchange factor for an ER lumenal chaperone of HSP70 family. The protein is Nucleotide exchange factor Sil1 of Drosophila melanogaster (Fruit fly).